We begin with the raw amino-acid sequence, 105 residues long: Nitrogenase-stabilizing/protective protein NifW 1 (105 aa).

Belongs to the NifW family. In terms of assembly, homotrimer; associates with NifD.

In terms of biological role, may protect the nitrogenase Fe-Mo protein from oxidative damage. This is Nitrogenase-stabilizing/protective protein NifW 1 from Trichormus variabilis (strain ATCC 29413 / PCC 7937) (Anabaena variabilis).